Consider the following 259-residue polypeptide: Hemin import ATP-binding protein HmuV (259 aa).

The ABC transporter domain maps to 8–242 (ISANNISYRI…KMIENVYGHK (235 aa)). 40 to 47 (GPNGAGKS) is a binding site for ATP.

The protein belongs to the ABC transporter superfamily. Heme (hemin) importer (TC 3.A.1.14.5) family. The complex is composed of two ATP-binding proteins (HmuV), two transmembrane proteins (HmuU) and a solute-binding protein (HmuT).

The protein resides in the cell inner membrane. Its function is as follows. Part of the ABC transporter complex HmuTUV involved in hemin import. Responsible for energy coupling to the transport system. The protein is Hemin import ATP-binding protein HmuV of Aliivibrio fischeri (strain ATCC 700601 / ES114) (Vibrio fischeri).